A 579-amino-acid chain; its full sequence is Polyadenylate-binding protein, cytoplasmic and nuclear (579 aa).

A compositionally biased stretch (basic and acidic residues) spans Met1 to Glu10. Residues Met1–Thr32 are disordered. 4 consecutive RRM domains span residues Ala35–Arg113, Gly123–Ser200, Thr216–Lys293, and Ile319–Arg396. One can recognise a PABC domain in the interval Gly487–Gln566. The disordered stretch occupies residues Ala560–Ala579. Residues Gln566 to Ala579 are compositionally biased toward low complexity.

The protein belongs to the polyadenylate-binding protein type-1 family.

It localises to the cytoplasm. The protein localises to the nucleus. Its function is as follows. Binds the poly(A) tail of mRNA. Appears to be an important mediator of the multiple roles of the poly(A) tail in mRNA biogenesis, stability and translation. In the nucleus, involved in both mRNA cleavage and polyadenylation. Is also required for efficient mRNA export to the cytoplasm. Acts in concert with a poly(A)-specific nuclease (PAN) to affect poly(A) tail shortening, which may occur concomitantly with either nucleocytoplasmic mRNA transport or translational initiation. In the cytoplasm, stimulates translation initiation and regulates mRNA decay through translation termination-coupled poly(A) shortening, probably mediated by PAN. The polypeptide is Polyadenylate-binding protein, cytoplasmic and nuclear (PAB1) (Candida glabrata (strain ATCC 2001 / BCRC 20586 / JCM 3761 / NBRC 0622 / NRRL Y-65 / CBS 138) (Yeast)).